We begin with the raw amino-acid sequence, 337 residues long: Large ribosomal subunit protein uL3 (337 aa).

The interval 1 to 26 (MGHAHAPRRGSLGYSPRVRARSQKPK) is disordered.

This sequence belongs to the universal ribosomal protein uL3 family. In terms of assembly, part of the 50S ribosomal subunit. Forms a cluster with proteins L14 and L24e.

Its function is as follows. One of the primary rRNA binding proteins, it binds directly near the 3'-end of the 23S rRNA, where it nucleates assembly of the 50S subunit. This is Large ribosomal subunit protein uL3 from Methanocella arvoryzae (strain DSM 22066 / NBRC 105507 / MRE50).